The chain runs to 232 residues: 5'-methylthioadenosine/S-adenosylhomocysteine nucleosidase (232 aa).

Glu12 (proton acceptor) is an active-site residue. Residues Gly78, Ile152, and 173–174 contribute to the substrate site; that span reads ME. Residue Asp197 is the Proton donor of the active site.

The protein belongs to the PNP/UDP phosphorylase family. MtnN subfamily. As to quaternary structure, homodimer.

The catalysed reaction is S-adenosyl-L-homocysteine + H2O = S-(5-deoxy-D-ribos-5-yl)-L-homocysteine + adenine. The enzyme catalyses S-methyl-5'-thioadenosine + H2O = 5-(methylsulfanyl)-D-ribose + adenine. It catalyses the reaction 5'-deoxyadenosine + H2O = 5-deoxy-D-ribose + adenine. It participates in amino-acid biosynthesis; L-methionine biosynthesis via salvage pathway; S-methyl-5-thio-alpha-D-ribose 1-phosphate from S-methyl-5'-thioadenosine (hydrolase route): step 1/2. Its function is as follows. Catalyzes the irreversible cleavage of the glycosidic bond in both 5'-methylthioadenosine (MTA) and S-adenosylhomocysteine (SAH/AdoHcy) to adenine and the corresponding thioribose, 5'-methylthioribose and S-ribosylhomocysteine, respectively. Also cleaves 5'-deoxyadenosine, a toxic by-product of radical S-adenosylmethionine (SAM) enzymes, into 5-deoxyribose and adenine. Thus, is required for in vivo function of the radical SAM enzymes biotin synthase and lipoic acid synthase, that are inhibited by 5'-deoxyadenosine accumulation. This chain is 5'-methylthioadenosine/S-adenosylhomocysteine nucleosidase, found in Erwinia tasmaniensis (strain DSM 17950 / CFBP 7177 / CIP 109463 / NCPPB 4357 / Et1/99).